The following is a 326-amino-acid chain: D-alanine--D-alanine ligase (326 aa).

The ATP-grasp domain maps to 114–313; sequence KRVWLQHGLR…YAELCVSIVS (200 aa). 140–195 serves as a coordination point for ATP; that stretch reads PDRLGLPLILKPPHEGSTVGITKVAGYSDMKEGYAQAAKFDDEVLAEQFIAGRELT. The Mg(2+) site is built by D267, E280, and N282.

It belongs to the D-alanine--D-alanine ligase family. It depends on Mg(2+) as a cofactor. Mn(2+) is required as a cofactor.

It localises to the cytoplasm. The catalysed reaction is 2 D-alanine + ATP = D-alanyl-D-alanine + ADP + phosphate + H(+). The protein operates within cell wall biogenesis; peptidoglycan biosynthesis. Cell wall formation. This is D-alanine--D-alanine ligase from Bordetella petrii (strain ATCC BAA-461 / DSM 12804 / CCUG 43448).